A 266-amino-acid chain; its full sequence is Undecaprenyl-diphosphatase (266 aa).

A run of 8 helical transmembrane segments spans residues 1–21 (MDTFQVIILALIQGLTEFLPI), 39–59 (QGLSFDVAVNTGSLFAVVIYF), 87–107 (WWIILATLPAVFFGFIAKDFI), 111–131 (LRSAGVIAVTTIVFGLLLWWA), 149–169 (ALLIGFAQALALIPGTSRSGA), 183–203 (AAARFSFLMSVPVSLGAAILV), 218–238 (ALTLGTVISFVAAYLCIHYFL), and 246–266 (MTPFVIYRLILGAVLCGFIFL).

It belongs to the UppP family.

It localises to the cell inner membrane. It catalyses the reaction di-trans,octa-cis-undecaprenyl diphosphate + H2O = di-trans,octa-cis-undecaprenyl phosphate + phosphate + H(+). Its function is as follows. Catalyzes the dephosphorylation of undecaprenyl diphosphate (UPP). Confers resistance to bacitracin. This Shewanella sp. (strain MR-7) protein is Undecaprenyl-diphosphatase.